A 226-amino-acid polypeptide reads, in one-letter code: MTIELKPGGLLIAIEGIDGAGKTTLARRLATTLDAAGARVVLSKEPTNGPWGTQLRQSAATGRLSAEEEAELLIRDRHEHVDTLIAPALARGDIVILDRYFPSMVAYQGAAGLPLDELLERNAFAPRPDVLLLLDLPPPTGLARIRARGDAPNHFETQDNLERCRTIFAALDLPGKHVVDASADADSVLRQAHAIIVAALADRLSGDAHTDTGKAALELLSGGRPA.

Position 16–23 (16–23 (GIDGAGKT)) interacts with ATP.

The protein belongs to the thymidylate kinase family.

The enzyme catalyses dTMP + ATP = dTDP + ADP. Its function is as follows. Phosphorylation of dTMP to form dTDP in both de novo and salvage pathways of dTTP synthesis. In Xanthomonas euvesicatoria pv. vesicatoria (strain 85-10) (Xanthomonas campestris pv. vesicatoria), this protein is Thymidylate kinase.